The following is a 224-amino-acid chain: MTGEHKRSSLIKRITNETKIQIALSLDGGPVSLAQSLFKDKDYSAEHAAQATSSQFISVNTGIGFLDHMLHALAKHGGWSVIIECVGDLHIDDHHSAEDTGIALGMAFKEALGHVRGIKRFGSGFAPLDEALSRAVIDMSNRPYAVVDLGLKREKIGDLSCEMIPHVLESFAQGAHVTMHVDCLRGFNDHHRAESAFKALAIAIKEAISSNGTDDIPSTKGVLF.

This sequence belongs to the imidazoleglycerol-phosphate dehydratase family.

It carries out the reaction D-erythro-1-(imidazol-4-yl)glycerol 3-phosphate = 3-(imidazol-4-yl)-2-oxopropyl phosphate + H2O. The protein operates within amino-acid biosynthesis; L-histidine biosynthesis; L-histidine from 5-phospho-alpha-D-ribose 1-diphosphate: step 6/9. In Komagataella pastoris (Yeast), this protein is Imidazoleglycerol-phosphate dehydratase (HIS3).